A 2429-amino-acid chain; its full sequence is Reducing polyketide synthase ppsB (2429 aa).

The region spanning 4-442 (DERVAIIGTG…GTNAHAILES (439 aa)) is the Ketosynthase family 3 (KS3) domain. Active-site for beta-ketoacyl synthase activity residues include Cys177, His317, and His362. The segment at 558-873 (VFTGQGAQWP…PYIGLAHRGE (316 aa)) is malonyl-CoA:ACP transacylase (MAT) domain. Residue Ser652 is the For acyl/malonyl transferase activity of the active site. Residues 945-1075 (HPLLGVLSSE…GRVILALGEA (131 aa)) form an N-terminal hotdog fold region. Positions 945–1227 (HPLLGVLSSE…QLEGIHLTLS (283 aa)) are product template (PT) domain. Residues 945 to 1233 (HPLLGVLSSE…LTLSKPKNSS (289 aa)) form the PKS/mFAS DH domain. A C-terminal hotdog fold region spans residues 1090–1233 (SYPMNVDKFY…LTLSKPKNSS (144 aa)). Positions 1409–2158 (LEVGAGTGSA…ISDLYDQLTS (750 aa)) are methyltransferase (CMeT) domain. A Carrier domain is found at 2350–2425 (EIILQLFKEK…SMVDEVVKRR (76 aa)). Residue Ser2385 is modified to O-(pantetheine 4'-phosphoryl)serine.

The protein operates within secondary metabolite biosynthesis. Reducing polyketide synthase; part of the gene cluster that mediates the biosynthesis of 2,4'-dihydroxy-3'-methoxypropiophenone. The first step of the pathway is the conversion of acetate into acetyl-CoA by the acyl-CoA ligase ppsA. Acetyl-CoA is then used as a starter unit by the polyketide synthase ppsB and condensed with 4 malonyl-CoA unit to produce the pentaketide backbone. During polyketide extension, the polykedite chain is probably reduced and dehydrated by the KR and PT domains, respectively. O-methylation seems to be catalyzed by an unknown methyltransferase rather than by the CMeT domain of ppsB. Two hydroxylations and one further decarboxylation step catalyzed by yet unknown enzymes are then required to yield 4'-hydroxy-3'-methoxypropiophenone. PpsC functions as a carrier protein to transport 4'-hydroxy-3'-methoxypropiophenone to a specific cell compartment in which 4'-hydroxy-3'-methoxypropiophenone is hydroxylated to 2,4'-dihydroxy-3'-methoxypropiophenone by a still to be identified enzyme. This chain is Reducing polyketide synthase ppsB, found in Aspergillus oryzae (strain ATCC 42149 / RIB 40) (Yellow koji mold).